Consider the following 303-residue polypeptide: Inner kinetochore subunit mal2 (303 aa).

This sequence belongs to the CENP-O/MCM21 family. As to quaternary structure, component of the heterotetrameric kinetochore subcomplex COMA, which consists of fta2, fta7, mal2 and mis17. The COMA subcomplex is part of a larger constitutive centromere-associated network (CCAN) (also known as central kinetochore Sim4 complex in fission yeast), which is composed of at least cnl2, cnp3, cnp20, fta1, fta2, fta3, fta4, fta6, fta7, mal2, mhf1, mhf2, mis6, mis15, mis17, sim4 and wip1.

The protein localises to the nucleus. It localises to the chromosome. It is found in the centromere. The protein resides in the kinetochore. Its function is as follows. Component of the kinetochore, a multiprotein complex that assembles on centromeric DNA and attaches chromosomes to spindle microtubules, mediating chromosome segregation and sister chromatid segregation during meiosis and mitosis. Component of the inner kinetochore COMA complex, which connects centromere-associated proteins and the outer kinetochore. COMA interacts with other inner kinetochore proteins to form the inner kinetochore constitutive centromere-associated network (CCAN), which serves as a structural platform for outer kinetochore assembly. The polypeptide is Inner kinetochore subunit mal2 (mal2) (Schizosaccharomyces pombe (strain 972 / ATCC 24843) (Fission yeast)).